The following is a 404-amino-acid chain: S-adenosylmethionine synthase (404 aa).

The segment covering 1 to 13 (MSQSRYFFTSESV) has biased composition (polar residues). The segment at 1-21 (MSQSRYFFTSESVSEGHPDKV) is disordered. An ATP-binding site is contributed by His17. Asp19 is a Mg(2+) binding site. A K(+)-binding site is contributed by Glu45. Residues Glu58 and Gln101 each contribute to the L-methionine site. The flexible loop stretch occupies residues 101–111 (QSPDINRGVDR). ATP-binding positions include 172–174 (DAK), 245–246 (RF), Asp254, 260–261 (RK), Ala277, and Lys281. Asp254 lines the L-methionine pocket. Residue Lys285 participates in L-methionine binding.

It belongs to the AdoMet synthase family. In terms of assembly, homotetramer; dimer of dimers. Mg(2+) serves as cofactor. It depends on K(+) as a cofactor.

It localises to the cytoplasm. The enzyme catalyses L-methionine + ATP + H2O = S-adenosyl-L-methionine + phosphate + diphosphate. It functions in the pathway amino-acid biosynthesis; S-adenosyl-L-methionine biosynthesis; S-adenosyl-L-methionine from L-methionine: step 1/1. Its function is as follows. Catalyzes the formation of S-adenosylmethionine (AdoMet) from methionine and ATP. The overall synthetic reaction is composed of two sequential steps, AdoMet formation and the subsequent tripolyphosphate hydrolysis which occurs prior to release of AdoMet from the enzyme. The polypeptide is S-adenosylmethionine synthase (Chlorobium phaeobacteroides (strain DSM 266 / SMG 266 / 2430)).